We begin with the raw amino-acid sequence, 2352 residues long: Cell wall alpha-1,3-glucan synthase mok12 (2352 aa).

Residues 1786 to 1813 (SNDFGIREVPLSDANQSSQADSTSIDRY) form a disordered region. Over residues 1798-1813 (DANQSSQADSTSIDRY) the composition is skewed to polar residues.

This sequence belongs to the glycosyltransferase group 1 family.

It catalyses the reaction [(1-&gt;3)-alpha-D-glucosyl](n) + UDP-alpha-D-glucose = [(1-&gt;3)-alpha-D-glucosyl](n+1) + UDP + H(+). The sequence is that of Cell wall alpha-1,3-glucan synthase mok12 (mok12) from Schizosaccharomyces pombe (strain 972 / ATCC 24843) (Fission yeast).